We begin with the raw amino-acid sequence, 304 residues long: Protein transport protein sec13 (304 aa).

WD repeat units lie at residues 12 to 51, 56 to 97, 102 to 143, 147 to 203, 211 to 253, and 259 to 298; these read GHDDMIHDAVLDYYGRRLATCSSDRTIKIFEIEGESQRLV, GHDG…WQRI, LHKA…WEHN, AHGL…NGYK, GHTD…PGEW, and NFDAAVWRVSWSLSGNVLAASSDNNKVTLWKENLKGEWEN.

Belongs to the WD repeat SEC13 family. As to quaternary structure, the COPII coat is composed of at least 5 proteins: the sec23/24 complex, the sec13/31 complex, and the protein vtr-7/sar1. Component of the nuclear pore complex (NPC). NPC constitutes the exclusive means of nucleocytoplasmic transport. NPCs allow the passive diffusion of ions and small molecules and the active, nuclear transport receptor-mediated bidirectional transport of macromolecules such as proteins, RNAs, ribonucleoparticles (RNPs), and ribosomal subunits across the nuclear envelope. Due to its 8-fold rotational symmetry, all subunits are present with 8 copies or multiples thereof.

The protein localises to the cytoplasmic vesicle. Its subcellular location is the COPII-coated vesicle membrane. It localises to the endoplasmic reticulum membrane. The protein resides in the nucleus. It is found in the nuclear pore complex. Its function is as follows. Component of the coat protein complex II (COPII) which promotes the formation of transport vesicles from the endoplasmic reticulum (ER). The coat has two main functions, the physical deformation of the endoplasmic reticulum membrane into vesicles and the selection of cargo molecules. It also functions as a component of the nuclear pore complex (NPC). NPC components, collectively referred to as nucleoporins (NUPs), can play the role of both NPC structural components and of docking or interaction partners for transiently associated nuclear transport factors. Nup-20/sec13 is required for efficient mRNA export from the nucleus to the cytoplasm and for correct nuclear pore biogenesis and distribution. This Neurospora crassa (strain ATCC 24698 / 74-OR23-1A / CBS 708.71 / DSM 1257 / FGSC 987) protein is Protein transport protein sec13 (nup-20).